The sequence spans 448 residues: Glutamyl-tRNA reductase (448 aa).

Substrate is bound by residues 49–52 (TCNR), S109, 114–116 (ETQ), and Q120. The active-site Nucleophile is the C50. NADP(+) is bound at residue 189–194 (GAGEMG).

The protein belongs to the glutamyl-tRNA reductase family. Homodimer.

The catalysed reaction is (S)-4-amino-5-oxopentanoate + tRNA(Glu) + NADP(+) = L-glutamyl-tRNA(Glu) + NADPH + H(+). It functions in the pathway porphyrin-containing compound metabolism; protoporphyrin-IX biosynthesis; 5-aminolevulinate from L-glutamyl-tRNA(Glu): step 1/2. Catalyzes the NADPH-dependent reduction of glutamyl-tRNA(Glu) to glutamate 1-semialdehyde (GSA). The protein is Glutamyl-tRNA reductase of Staphylococcus epidermidis (strain ATCC 12228 / FDA PCI 1200).